A 178-amino-acid polypeptide reads, in one-letter code: Nuclear transcription factor Y subunit B-2 (178 aa).

The DNA-binding element occupies 39–45 (LPIANIS). A subunit association domain (SAD) region spans residues 66 to 77 (LQECVSEFISFV). Positions 131-156 (SSKAGDGSVKKDTIGPHSGASSSSAQ) are disordered.

It belongs to the NFYB/HAP3 subunit family. In terms of assembly, heterotrimeric transcription factor composed of three components, NF-YA, NF-YB and NF-YC. NF-YB and NF-YC must interact and dimerize for NF-YA association and DNA binding. Interacts with NFYC4 and NFYC6. In terms of tissue distribution, ubiquitous.

The protein resides in the nucleus. In terms of biological role, component of the NF-Y/HAP transcription factor complex. The NF-Y complex stimulates the transcription of various genes by recognizing and binding to a CCAAT motif in promoters. May regulate the expression of photosynthetic genes, and may be involved in chloroplast and amyloplast development. This Oryza sativa subsp. japonica (Rice) protein is Nuclear transcription factor Y subunit B-2 (NFYB2).